A 124-amino-acid polypeptide reads, in one-letter code: Small ribosomal subunit protein uS12 (124 aa).

Asp-89 is subject to 3-methylthioaspartic acid.

It belongs to the universal ribosomal protein uS12 family. In terms of assembly, part of the 30S ribosomal subunit. Contacts proteins S8 and S17. May interact with IF1 in the 30S initiation complex.

Functionally, with S4 and S5 plays an important role in translational accuracy. In terms of biological role, interacts with and stabilizes bases of the 16S rRNA that are involved in tRNA selection in the A site and with the mRNA backbone. Located at the interface of the 30S and 50S subunits, it traverses the body of the 30S subunit contacting proteins on the other side and probably holding the rRNA structure together. The combined cluster of proteins S8, S12 and S17 appears to hold together the shoulder and platform of the 30S subunit. The protein is Small ribosomal subunit protein uS12 of Proteus mirabilis (strain HI4320).